The following is a 455-amino-acid chain: Protein chibby homolog 2 (455 aa).

Phosphoserine occurs at positions 41, 86, 89, 97, 124, 144, 148, and 150. Residues lysine 160 to valine 197 are a coiled coil. Phosphoserine occurs at positions 211 and 225. A coiled-coil region spans residues glycine 240–tyrosine 266. Positions tryptophan 267–serine 318 are disordered. Over residues proline 270–histidine 291 the composition is skewed to basic and acidic residues. Phosphoserine occurs at positions 276 and 332. A coiled-coil region spans residues serine 350–isoleucine 421.

Belongs to the chibby family. SPERT subfamily. Homodimer. Binds to NEK1.

The chain is Protein chibby homolog 2 (CBY2) from Bos taurus (Bovine).